The primary structure comprises 2635 residues: Protein unc-79 homolog (2635 aa).

Phosphoserine occurs at positions 754 and 758. Disordered stretches follow at residues 907-929 (GPEGEEEENPASKHGENPGNCTE), 1538-1575 (IAQRPNDPGRSRQNSATRPDNSEIPENPAMEGFPDARR), 1607-1678 (LIDL…SVLS), 1693-1832 (SKDF…FKIQ), 1863-1909 (LGEQ…TQYR), and 1929-1950 (LEHQSSAPHNISNWDTEQIQPG). Residues 1666 to 1678 (SSPSVPSHPSVLS) show a composition bias toward low complexity. Polar residues predominate over residues 1699-1713 (KDSGNNQSAGNTDSA). Basic and acidic residues predominate over residues 1761-1775 (LDDHPDPGTEGEKPG). 2 stretches are compositionally biased toward polar residues: residues 1897 to 1909 (ETSSHSSISTQYR) and 1929 to 1947 (LEHQSSAPHNISNWDTEQI). The next 2 helical transmembrane spans lie at 2223 to 2243 (LLSFVIQNAVFTLAYLVELCG) and 2466 to 2486 (VLHMCSLFHAFIFAQLWTVYC).

The protein belongs to the unc-79 family. In terms of assembly, NALCN complex consists of NALCN and auxiliary subunits, UNC79, UNC80 and NACL1. These auxiliary subunits are essential for the NALCN channel function. UNC80 bridges NALCN to UNC79.

It is found in the cell membrane. Its function is as follows. Auxiliary subunit of the NALCN sodium channel complex, a voltage-gated ion channel responsible for the resting Na(+) permeability that controls neuronal excitability. Activated by neuropeptides substance P, neurotensin, and extracellular calcium that regulates neuronal excitability by controlling the sizes of NALCN-dependent sodium-leak current. This is Protein unc-79 homolog (UNC79) from Homo sapiens (Human).